The following is a 118-amino-acid chain: T cell receptor gamma variable 4 (118 aa).

The first 17 residues, 1 to 17, serve as a signal peptide directing secretion; it reads MQWALAVLLAFLSPASQ. One can recognise an Ig-like domain in the interval 18 to 118; that stretch reads KSSNLEGRTK…GVYYCATWDG (101 aa). C41 and C113 are joined by a disulfide. A glycan (N-linked (GlcNAc...) asparagine) is linked at N106.

As to quaternary structure, gamma-delta TR is a heterodimer composed of a gamma and delta chain; disulfide-linked. The gamma-delta TR is associated with the transmembrane signaling CD3 coreceptor proteins following the stoichiometry: a single gamma-delta TR heterodimer associates with one CD3D-CD3E heterodimer, one CD3G-CD3E heterodimer and one CD247 homodimer forming a stable octameric structure. Upon activation, gamma-delta TR complex associates with FCER1G to initiate intracellular signaling.

The protein resides in the cell membrane. In terms of biological role, v region of the variable domain of T cell receptor (TR) gamma chain that participates in the antigen recognition. Gamma-delta TRs recognize a variety of self and foreign non-peptide antigens frequently expressed at the epithelial boundaries between the host and external environment, including endogenous lipids presented by MH-like protein CD1D and phosphoantigens presented by butyrophilin-like molecule BTN3A1. Upon antigen recognition induces rapid, innate-like immune responses involved in pathogen clearance and tissue repair. Binding of gamma-delta TR complex to antigen triggers phosphorylation of immunoreceptor tyrosine-based activation motifs (ITAMs) in the CD3 chains by the LCK and FYN kinases, allowing the recruitment, phosphorylation, and activation of ZAP70 that facilitates phosphorylation of the scaffolding proteins LCP2 and LAT. This lead to the formation of a supramolecular signalosome that recruits the phospholipase PLCG1, resulting in calcium mobilization and ERK activation, ultimately leading to T cell expansion and differentiation into effector cells. Gamma-delta TRs are produced through somatic rearrangement of a limited repertoire of variable (V), diversity (D), and joining (J) genes. The potential diversity of gamma-delta TRs is conferred by the unique ability to rearrange (D) genes in tandem and to utilize all three reading frames. The combinatorial diversity is considerably increased by the sequence exonuclease trimming and random nucleotide (N) region additions which occur during the V-(D)-J rearrangements. In Homo sapiens (Human), this protein is T cell receptor gamma variable 4.